The sequence spans 211 residues: MSKGILGKKLGMTGLFSSDGRHIPVTVIEAGPCVVTQIKTKDKDGYNALQLGFGPKKERHTNKPETGHFEKSGGAAYVMVKEFAVDNPEEFELGQSLSTELFAVGEKIDVAGVSKGRGFAGVMKRHGFGGGRMTHGGRCKRRPGSIGCSAWPSKVIKGKKLPGHYGVERKTVRNLEIVDIRADQNLILLKGAVPGAKSGMLELKKLKFGGK.

It belongs to the universal ribosomal protein uL3 family. Part of the 50S ribosomal subunit. Forms a cluster with proteins L14 and L19.

In terms of biological role, one of the primary rRNA binding proteins, it binds directly near the 3'-end of the 23S rRNA, where it nucleates assembly of the 50S subunit. The protein is Large ribosomal subunit protein uL3 of Desulfatibacillum aliphaticivorans.